The following is a 225-amino-acid chain: U2 small nuclear ribonucleoprotein B'' (225 aa).

In terms of domain architecture, RRM 1 spans 7 to 86; the sequence is HTIYINNMND…KPMRIQYAKT (80 aa). The disordered stretch occupies residues 99–145; it reads ADKEKKKEKKKAKTVEQTATTTNKKPGQGTPNSANTQGNSTPNPQVP. The residue at position 111 (Lys-111) is an N6-acetyllysine; alternate. Residue Lys-111 forms a Glycyl lysine isopeptide (Lys-Gly) (interchain with G-Cter in SUMO2); alternate linkage. Positions 113 to 123 are enriched in low complexity; the sequence is VEQTATTTNKK. The span at 127–141 shows a compositional bias: polar residues; the sequence is GTPNSANTQGNSTPN. Tyr-151 is subject to Phosphotyrosine. Positions 151 to 225 constitute an RRM 2 domain; it reads YILFLNNLPE…HAMKITYAKK (75 aa).

It belongs to the RRM U1 A/B'' family. As to quaternary structure, identified in the spliceosome B complex. Identified in the spliceosome C complex. Present in a spliceosome complex assembled in vitro, and composed of SNRPB2, HPRP8BP and CRNKL1. Contributes to the binding of stem loop IV of U2 snRNA with SNRPP1.

It localises to the nucleus. Functionally, involved in pre-mRNA splicing as component of the spliceosome. Associated with sn-RNP U2, where it contributes to the binding of stem loop IV of U2 snRNA. The chain is U2 small nuclear ribonucleoprotein B'' (SNRPB2) from Homo sapiens (Human).